The chain runs to 132 residues: Transmembrane protein C1orf162 homolog (132 aa).

The helical transmembrane segment at I36 to L56 threads the bilayer. The interval T95–P132 is disordered. The segment covering N104–V124 has biased composition (polar residues). S111 is modified (phosphoserine).

The protein resides in the membrane. The polypeptide is Transmembrane protein C1orf162 homolog (Mus musculus (Mouse)).